Consider the following 124-residue polypeptide: Apolipoprotein C-IV (124 aa).

The first 27 residues, 1 to 27, serve as a signal peptide directing secretion; sequence MLLPRRGLRTLPSLCLYILVLVWVVAC.

It belongs to the apolipoprotein C4 family. Glycosylated; contains sialic acid. Present in up to five sialylated isoforms. In terms of tissue distribution, blood plasma, associated primarily with VLDL and HDL. Expressed mainly in the liver.

It is found in the secreted. Functionally, may participate in lipoprotein metabolism. This is Apolipoprotein C-IV (APOC4) from Oryctolagus cuniculus (Rabbit).